Reading from the N-terminus, the 509-residue chain is Dye-decolorizing peroxidase AauDyP1 (509 aa).

The first 22 residues, 1-22, serve as a signal peptide directing secretion; that stretch reads MRLSPVFVALLSGLLAADLGLA. A propeptide spanning residues 23–61 is cleaved from the precursor; sequence RSVAPRVADSPAAVTGTRKTSLLKNVAGLPPVPSAAQVA. Aspartate 229 functions as the Proton acceptor in the catalytic mechanism. A glycan (N-linked (GlcNAc...) asparagine) is linked at asparagine 343. Histidine 365 lines the heme pocket. Residues asparagine 383, asparagine 410, and asparagine 476 are each glycosylated (N-linked (GlcNAc...) asparagine).

The protein belongs to the DyP-type peroxidase family. The cofactor is heme b.

It is found in the secreted. The catalysed reaction is Reactive Blue 5 + 2 H2O2 = 2,2'-disulfonyl azobenzene + 3-[(4-amino-6-chloro-1,3,5-triazin-2-yl)amino]benzenesulfonate + phthalate + 2 H2O + 2 H(+). It carries out the reaction 2 a phenolic donor + H2O2 = 2 a phenolic radical donor + 2 H2O. Its activity is regulated as follows. Inhibited by imidazole. Manganese-independent peroxidase that is able to convert a large number of compounds, but its physiological substrate is not known. In addition to classic peroxidase substrates (e.g. 2,6-dimethoxyphenol), oxidizes dyes such as Reactive Blue 5 and Reactive Black 5. The sequence is that of Dye-decolorizing peroxidase AauDyP1 from Auricularia auricula-judae (Judas ear fungus).